Consider the following 570-residue polypeptide: MTEPIISFKDFSFQYHSQATPTLQNINVDIYPGEKVLVVGASGSGKSTFANCINGLIPFKTKGNVTGELHINNQDATVSCLHKRSNVVGTVLQDTDGQFIGLTAAEDMAFLLENNCVEQDDMKKNVSYWAEKVDMIEHLNHRPQDLSGGQKQRVSLGGILIHRTPILILDEPLANLDPATGHETLRLLNNIHEETKSTMIIVEHRLEESLDDTFDRVLLFKDGKIIANTTPSDLLKSSKLKEAGIREPLYCTALKYAEVDVESIDNLANLREVCMSEHVKFKVKKWIDKTSSNDDNKYKSEPLLELNEVCVQYSDYSNSVLNNVQLNVYRREMLSIVGHNGAGKSTLAKAICGFLDITGNIQFCNKGFNQLSISERSEFIGYVMQNPNHMISEKMIYDEVALGLRARGMKESDIKIRVENVLKICGLYAFRNWPIAALSYGQKKRVTIASVLVLNPEIIILDEPTAGQDFYHYNEIMSFLIELNRQGKTIIMITHDMHLLSEYSSRTVVLSKGQVVADTTPVLVLNDKKICEIASLRQTSLFEMAEYIGISEPQKLIQLFINHDRKVRRQ.

ABC transporter domains are found at residues 6–247 (ISFK…GIRE) and 304–537 (LELN…ASLR). ATP-binding positions include 40 to 47 (GASGSGKS) and 338 to 345 (GHNGAGKS).

Belongs to the ABC transporter superfamily.

The protein resides in the cell membrane. Its function is as follows. Probably part of an ABC transporter complex. Responsible for energy coupling to the transport system. The chain is Putative ABC transporter ATP-binding protein SAR2766 from Staphylococcus aureus (strain MRSA252).